A 185-amino-acid chain; its full sequence is Meiotic expression up-regulated protein 31 (185 aa).

The sequence is that of Meiotic expression up-regulated protein 31 (meu31) from Schizosaccharomyces pombe (strain 972 / ATCC 24843) (Fission yeast).